A 74-amino-acid polypeptide reads, in one-letter code: Large ribosomal subunit protein bL31 (74 aa).

Residues Cys16, Cys18, Cys38, and Cys41 each coordinate Zn(2+).

It belongs to the bacterial ribosomal protein bL31 family. Type A subfamily. As to quaternary structure, part of the 50S ribosomal subunit. The cofactor is Zn(2+).

Binds the 23S rRNA. The protein is Large ribosomal subunit protein bL31 of Acinetobacter baumannii (strain AB307-0294).